Reading from the N-terminus, the 375-residue chain is Ubl carboxyl-terminal hydrolase 18 (375 aa).

Residues 18-45 (ESPQSPADLEEKKEEDSNMKREQPRERP) form a disordered region. Positions 26–45 (LEEKKEEDSNMKREQPRERP) are enriched in basic and acidic residues. Residues 55-373 (VGLHNIGQTC…TAYLLVYMKM (319 aa)) form the USP domain. The active-site Nucleophile is the Cys64. The Proton acceptor role is filled by His321.

This sequence belongs to the peptidase C19 family. As to quaternary structure, interacts with STAT2; the interaction is direct. Interacts with IFNAR2; indirectly via STAT2, it negatively regulates the assembly of the ternary interferon-IFNAR1-IFNAR2 complex and inhibits type I interferon signaling. Interacts with STING1. Interacts with USP20.

The catalysed reaction is Thiol-dependent hydrolysis of ester, thioester, amide, peptide and isopeptide bonds formed by the C-terminal Gly of ubiquitin (a 76-residue protein attached to proteins as an intracellular targeting signal).. Its function is as follows. Interferon-induced ISG15-specific protease that plays a crucial role for maintaining a proper balance of ISG15-conjugated proteins in cells. Regulates protein ISGylation by efficiently cleaving ISG15 conjugates linked via isopeptide bonds. Regulates T-cell activation and T-helper 17 (Th17) cell differentiation by deubiquitinating TAK1, likely to keep TAK1-TAB complexes in steady conditions. In turn, restricts activation of NF-kappa-B, NFAT, and JNK as well as expression of IL2 in T-cells after TCR activation. Acts as a molecular adapter with USP20 to promote innate antiviral response through deubiquitinating STING1. Involved also in the negative regulation of the inflammatory response triggered by type I interferon. Upon recruitment by STAT2 to the type I interferon receptor subunit IFNAR2 interferes with the assembly of the ternary interferon-IFNAR1-IFNAR2 complex and acts as a negative regulator of the type I interferon signaling pathway. The chain is Ubl carboxyl-terminal hydrolase 18 (USP18) from Pongo abelii (Sumatran orangutan).